Reading from the N-terminus, the 641-residue chain is Epsin-2 (641 aa).

The a 1,2-diacyl-sn-glycero-3-phospho-(1D-myo-inositol-4,5-bisphosphate) site is built by Arg-8, Lys-11, Arg-25, Asn-30, Arg-63, and His-73. The ENTH domain maps to 12–144 (NIVNNYSEAE…KDEERLKAER (133 aa)). 2 positions are modified to phosphoserine: Arg-153 and Gln-156. A compositionally biased stretch (polar residues) spans 163 to 181 (SNQITFGRGSSQPNLSTSH). Disordered stretches follow at residues 163–214 (SNQI…GAPL) and 255–275 (RATS…TSGE). At Arg-170 the chain carries Omega-N-methylarginine. Ser-173, Ser-192, and Ser-195 each carry phosphoserine. Polar residues predominate over residues 259–273 (PRVSSELEQARPQTS). 2 UIM domains span residues 275 to 294 (EEEL…AEQE) and 300 to 319 (GDDL…TVKI). Positions 340–425 (ALPSSGPAAQ…QPASSAGKRA (86 aa)) are disordered. 6 tandem repeats follow at residues 352–354 (EPW), 364–366 (NPW), 377–379 (DPW), 391–393 (DPW), 409–411 (DPW), and 427–429 (DAW). The interval 352-639 (EPWGPSASTN…AQATGTTNPF (288 aa)) is 6 X 3 AA repeats of [DE]-P-W. A compositionally biased stretch (low complexity) spans 408-421 (SDPWAASQQPASSA). The segment at 470 to 512 (TAESVTSLPSQNNGTTSPDPFESQPLTVASSKPSSARKTPESF) is disordered. Residues 472–506 (ESVTSLPSQNNGTTSPDPFESQPLTVASSKPSSAR) are compositionally biased toward polar residues. At Ser-486 the chain carries Phosphoserine. Position 508 is a phosphothreonine (Thr-508). 2 repeat units span residues 537 to 539 (NPF) and 552 to 554 (NPF). A 3 X 3 AA repeats of N-P-F region spans residues 537-639 (NPFLAPGAPA…AQATGTTNPF (103 aa)). Ser-570 is modified (phosphoserine). Repeat unit 3 spans residues 637–639 (NPF).

The protein belongs to the epsin family. As to quaternary structure, binds EPS15. Interacts with ITSN1. Binds AP-2 and clathrin. Interacts with UBQLN2. In terms of processing, ubiquitinated. In terms of tissue distribution, highest expression is found in brain. Detected at lower levels in lung and liver.

It is found in the cytoplasm. The protein localises to the cytoplasmic vesicle. It localises to the clathrin-coated vesicle. Its function is as follows. Plays a role in the formation of clathrin-coated invaginations and endocytosis. The polypeptide is Epsin-2 (EPN2) (Homo sapiens (Human)).